The primary structure comprises 329 residues: G-protein coupled bile acid receptor 1 (329 aa).

Residues 1-15 (MMTPNSTELSAIPMG) lie on the Extracellular side of the membrane. Asparagine 5 is a glycosylation site (N-linked (GlcNAc...) asparagine). The helical transmembrane segment at 16 to 36 (VLGLSLALASLIVIANLLLAL) threads the bilayer. Over 37 to 49 (GIALDRHLRSPPA) the chain is Cytoplasmic. A helical transmembrane segment spans residues 50-70 (GCFFLSLLLAGLLTGLALPML). At 71-84 (PGLWSRNHQGYWSC) the chain is on the extracellular side. A disulfide bond links cysteine 84 and cysteine 154. Residues 85-105 (LLLHLTPNFCFLSLLANLLLV) form a helical membrane-spanning segment. The Cytoplasmic segment spans residues 106-124 (HGERYMAVLQPLRPHGSVR). Residues 125 to 145 (LALFLTWVSSLFFASLPALGW) form a helical membrane-spanning segment. Topologically, residues 146-164 (NHWSPDANCSSQAVFPAPY) are extracellular. A glycan (N-linked (GlcNAc...) asparagine) is linked at asparagine 153. Residues 165 to 185 (LYLEVYGLLLPAVGATALLSV) traverse the membrane as a helical segment. Topologically, residues 186–229 (RVLATAHRQLCEIRRLERAVCRDVPSTLARALTWRQARAQAGAT) are cytoplasmic. A helical membrane pass occupies residues 230–250 (LLFLLCWGPYVATLLLSVLAY). The Extracellular segment spans residues 251–260 (ERRPPLGPGT). A helical membrane pass occupies residues 261 to 281 (LLSLISLGSTSAAAVPVAMGL). Residues 282 to 329 (GDQRYTAPWRTAAQRCLRVLRGRAKRDNPGPSTAYHTSSQCSIDLDLN) are Cytoplasmic-facing.

The protein belongs to the G-protein coupled receptor 1 family.

The protein resides in the cell membrane. Its function is as follows. Receptor for bile acid. Bile acid-binding induces its internalization, activation of extracellular signal-regulated kinase and intracellular cAMP production. May be involved in the suppression of macrophage functions by bile acids. Involved in bile acid promoted GLP1R secretion. This Mus musculus (Mouse) protein is G-protein coupled bile acid receptor 1 (Gpbar1).